The chain runs to 317 residues: Transaldolase (317 aa).

The active-site Schiff-base intermediate with substrate is lysine 126.

The protein belongs to the transaldolase family. Type 1 subfamily. Homodimer.

The protein localises to the cytoplasm. The catalysed reaction is D-sedoheptulose 7-phosphate + D-glyceraldehyde 3-phosphate = D-erythrose 4-phosphate + beta-D-fructose 6-phosphate. The protein operates within carbohydrate degradation; pentose phosphate pathway; D-glyceraldehyde 3-phosphate and beta-D-fructose 6-phosphate from D-ribose 5-phosphate and D-xylulose 5-phosphate (non-oxidative stage): step 2/3. In terms of biological role, transaldolase is important for the balance of metabolites in the pentose-phosphate pathway. This Burkholderia orbicola (strain AU 1054) protein is Transaldolase.